We begin with the raw amino-acid sequence, 563 residues long: Efflux pump notK (563 aa).

Residues 1-32 (MTKDEDSGTTDGGYSTPDIAVQEKQDQPPAPE) are disordered. 14 consecutive transmembrane segments (helical) span residues 48-68 (IFLS…AIPG), 78-98 (DVGW…PMWG), 108-128 (LVYL…AAAP), 138-158 (ALQG…ISYV), 165-185 (AMLI…GPLL), 197-217 (WCFW…VLFF), 239-259 (LPGF…LQWG), 270-290 (VIAT…VEWI), 312-332 (LYGW…PIYF), 345-365 (VNSL…GFLI), 374-394 (YEFA…TLDI), 406-426 (VIFG…LESF), 438-458 (VMLM…QSIF), and 509-529 (VFAF…AIPF). The interval 538-563 (GPSNGQEEEEGKKDGPAEKKEDEVAV) is disordered. The span at 547–563 (EGKKDGPAEKKEDEVAV) shows a compositional bias: basic and acidic residues.

The protein belongs to the major facilitator superfamily. TCR/Tet family.

Its subcellular location is the cell membrane. Functionally, efflux pump; part of the gene cluster that mediates the biosynthesis of notoamide, a fungal indole alkaloid that belongs to a family of natural products containing a characteristic bicyclo[2.2.2]diazaoctane core. The sequence is that of Efflux pump notK from Aspergillus sp. (strain MF297-2).